We begin with the raw amino-acid sequence, 34 residues long: Putative protein YmiB (34 aa).

The chain crosses the membrane as a helical span at residues 7–24; the sequence is TAAKRIVFFIYLFVIQFW.

The protein localises to the membrane. This Escherichia coli (strain K12) protein is Putative protein YmiB (ymiB).